The chain runs to 371 residues: Mitogen-activated protein kinase homolog MMK2 (371 aa).

The Protein kinase domain occupies 37–323; it reads VPPIRSVGRG…VDEALCHPYM (287 aa). Residues 43-51 and K66 each bind ATP; that span reads VGRGAYGIV. Residue D163 is the Proton acceptor of the active site. Position 195 is a phosphothreonine (T195). The short motif at 195-197 is the TXY element; it reads TEY. Residue Y197 is modified to Phosphotyrosine.

It belongs to the protein kinase superfamily. CMGC Ser/Thr protein kinase family. MAP kinase subfamily. It depends on Mg(2+) as a cofactor. Dually phosphorylated on Thr-195 and Tyr-197, which activates the enzyme. Autophosphorylated.

It carries out the reaction L-seryl-[protein] + ATP = O-phospho-L-seryl-[protein] + ADP + H(+). The enzyme catalyses L-threonyl-[protein] + ATP = O-phospho-L-threonyl-[protein] + ADP + H(+). Activated by tyrosine and threonine phosphorylation. In Medicago sativa (Alfalfa), this protein is Mitogen-activated protein kinase homolog MMK2 (MMK2).